The sequence spans 143 residues: Hemoglobin subunit alpha (143 aa).

A Globin domain is found at 3-143; that stretch reads KLSGEDKANV…TMRLCISKYR (141 aa). Histidine 60 is a binding site for O2. Position 89 (histidine 89) interacts with heme b.

This sequence belongs to the globin family. As to quaternary structure, heterotetramer of two alpha chains and two beta chains. In terms of tissue distribution, red blood cells.

Functionally, involved in oxygen transport from the lung to the various peripheral tissues. The sequence is that of Hemoglobin subunit alpha (HBA) from Ambystoma mexicanum (Axolotl).